The following is a 316-amino-acid chain: Mannose-6-phosphate isomerase (316 aa).

Residues Q95, H97, E114, and H171 each contribute to the Zn(2+) site. R191 is a catalytic residue.

It belongs to the mannose-6-phosphate isomerase type 1 family. Requires Zn(2+) as cofactor.

It catalyses the reaction D-mannose 6-phosphate = D-fructose 6-phosphate. In Streptococcus mutans serotype c (strain ATCC 700610 / UA159), this protein is Mannose-6-phosphate isomerase (pmi).